We begin with the raw amino-acid sequence, 368 residues long: Homoserine O-acetyltransferase (368 aa).

Residues 43 to 346 enclose the AB hydrolase-1 domain; sequence ILLEHALTGT…EYGHDAFLVE (304 aa). Ser-145 (nucleophile) is an active-site residue. Arg-212 is a substrate binding site. Catalysis depends on residues Asp-307 and His-340. Asp-341 contacts substrate.

It belongs to the AB hydrolase superfamily. MetX family. As to quaternary structure, homodimer.

It localises to the cytoplasm. The enzyme catalyses L-homoserine + acetyl-CoA = O-acetyl-L-homoserine + CoA. It functions in the pathway amino-acid biosynthesis; L-methionine biosynthesis via de novo pathway; O-acetyl-L-homoserine from L-homoserine: step 1/1. Functionally, transfers an acetyl group from acetyl-CoA to L-homoserine, forming acetyl-L-homoserine. The protein is Homoserine O-acetyltransferase of Listeria innocua serovar 6a (strain ATCC BAA-680 / CLIP 11262).